Here is a 463-residue protein sequence, read N- to C-terminus: Spermidine/putrescine import ATP-binding protein PotA (463 aa).

Residues 10–240 enclose the ABC transporter domain; that stretch reads IEVSHVSKFF…PINSFVADFI (231 aa). 42–49 lines the ATP pocket; the sequence is GPSGCGKT.

This sequence belongs to the ABC transporter superfamily. Spermidine/putrescine importer (TC 3.A.1.11.1) family. In terms of assembly, the complex is composed of two ATP-binding proteins (PotA), two transmembrane proteins (PotB and PotC) and a solute-binding protein (PotD).

It localises to the cell inner membrane. It carries out the reaction ATP + H2O + polyamine-[polyamine-binding protein]Side 1 = ADP + phosphate + polyamineSide 2 + [polyamine-binding protein]Side 1.. In terms of biological role, part of the ABC transporter complex PotABCD involved in spermidine/putrescine import. Responsible for energy coupling to the transport system. The chain is Spermidine/putrescine import ATP-binding protein PotA from Bacteroides thetaiotaomicron (strain ATCC 29148 / DSM 2079 / JCM 5827 / CCUG 10774 / NCTC 10582 / VPI-5482 / E50).